The chain runs to 364 residues: N-acetyl-gamma-glutamyl-phosphate reductase (364 aa).

Cysteine 157 is a catalytic residue.

This sequence belongs to the NAGSA dehydrogenase family. Type 1 subfamily.

It localises to the cytoplasm. It carries out the reaction N-acetyl-L-glutamate 5-semialdehyde + phosphate + NADP(+) = N-acetyl-L-glutamyl 5-phosphate + NADPH + H(+). The protein operates within amino-acid biosynthesis; L-arginine biosynthesis; N(2)-acetyl-L-ornithine from L-glutamate: step 3/4. In terms of biological role, catalyzes the NADPH-dependent reduction of N-acetyl-5-glutamyl phosphate to yield N-acetyl-L-glutamate 5-semialdehyde. In Bifidobacterium longum (strain DJO10A), this protein is N-acetyl-gamma-glutamyl-phosphate reductase.